We begin with the raw amino-acid sequence, 67 residues long: ATP synthase F(0) complex subunit 8 (67 aa).

Residues 8–24 traverse the membrane as a helical segment; that stretch reads TWFITIISSMITLFILF. N6-acetyllysine; alternate is present on K54. N6-succinyllysine; alternate is present on K54. K57 bears the N6-acetyllysine mark.

It belongs to the ATPase protein 8 family. In terms of assembly, component of the ATP synthase complex composed at least of ATP5F1A/subunit alpha, ATP5F1B/subunit beta, ATP5MC1/subunit c (homooctomer), MT-ATP6/subunit a, MT-ATP8/subunit 8, ATP5ME/subunit e, ATP5MF/subunit f, ATP5MG/subunit g, ATP5MK/subunit k, ATP5MJ/subunit j, ATP5F1C/subunit gamma, ATP5F1D/subunit delta, ATP5F1E/subunit epsilon, ATP5PF/subunit F6, ATP5PB/subunit b, ATP5PD/subunit d, ATP5PO/subunit OSCP. ATP synthase complex consists of a soluble F(1) head domain (subunits alpha(3) and beta(3)) - the catalytic core - and a membrane F(0) domain - the membrane proton channel (subunits c, a, 8, e, f, g, k and j). These two domains are linked by a central stalk (subunits gamma, delta, and epsilon) rotating inside the F1 region and a stationary peripheral stalk (subunits F6, b, d, and OSCP). Interacts with PRICKLE3.

Its subcellular location is the mitochondrion membrane. Subunit 8, of the mitochondrial membrane ATP synthase complex (F(1)F(0) ATP synthase or Complex V) that produces ATP from ADP in the presence of a proton gradient across the membrane which is generated by electron transport complexes of the respiratory chain. ATP synthase complex consist of a soluble F(1) head domain - the catalytic core - and a membrane F(1) domain - the membrane proton channel. These two domains are linked by a central stalk rotating inside the F(1) region and a stationary peripheral stalk. During catalysis, ATP synthesis in the catalytic domain of F(1) is coupled via a rotary mechanism of the central stalk subunits to proton translocation. In vivo, can only synthesize ATP although its ATP hydrolase activity can be activated artificially in vitro. Part of the complex F(0) domain. In Mus musculus (Mouse), this protein is ATP synthase F(0) complex subunit 8.